Consider the following 84-residue polypeptide: Large ribosomal subunit protein bL27 (84 aa).

A compositionally biased stretch (polar residues) spans 1 to 11 (MATTKAGGSTK). Residues 1–20 (MATTKAGGSTKNGRDSHSKR) form a disordered region.

The protein belongs to the bacterial ribosomal protein bL27 family.

The chain is Large ribosomal subunit protein bL27 from Mycoplasmopsis synoviae (strain 53) (Mycoplasma synoviae).